Reading from the N-terminus, the 347-residue chain is Sensor protein VraS (347 aa).

Helical transmembrane passes span Ile-13–Ile-33 and Ile-43–Val-63. The 192-residue stretch at Arg-150 to Lys-341 folds into the Histidine kinase domain. His-156 bears the Phosphohistidine mark.

Autophosphorylated on His-156.

It is found in the cell membrane. The enzyme catalyses ATP + protein L-histidine = ADP + protein N-phospho-L-histidine.. Functionally, member of the two-component regulatory system PprA/PprB involved in biofilm formation by controlling the expression of many related genes including type IVb pili major subunit flp pilin, adhesin bapA or cupE fimbriae. Also modulates quorum-sensing signal production acting on both negative and positive modulators. Functions as a heme sensor histidine kinase which is autophosphorylated at a histidine residue and transfers its phosphate group to PprB. In Staphylococcus aureus (strain Mu3 / ATCC 700698), this protein is Sensor protein VraS (vraS).